Consider the following 1520-residue polypeptide: Glutamate synthase [NADPH] large chain (1520 aa).

Residue cysteine 22 is the For GATase activity of the active site. Residues 22–415 form the Glutamine amidotransferase type-2 domain; sequence CGIGLYAHLK…PGKMLLIDLE (394 aa). A disordered region spans residues 890–913; the sequence is GGKSNSGEGGEDPKRFVPDENGDD. Basic and acidic residues predominate over residues 900–913; the sequence is EDPKRFVPDENGDD. 1060 to 1112 is a binding site for FMN; that stretch reads LAEAHQTLMLNGLRDRVVLETDGKLMTGRDVVMAALLGAEEFGFATAPLVVLG. [3Fe-4S] cluster contacts are provided by cysteine 1113, cysteine 1119, and cysteine 1124.

This sequence belongs to the glutamate synthase family. As to quaternary structure, aggregate of 4 catalytic active heterodimers, consisting of a large and a small subunit. [3Fe-4S] cluster is required as a cofactor. Requires FAD as cofactor. It depends on FMN as a cofactor.

The enzyme catalyses 2 L-glutamate + NADP(+) = L-glutamine + 2-oxoglutarate + NADPH + H(+). It participates in amino-acid biosynthesis; L-glutamate biosynthesis via GLT pathway; L-glutamate from 2-oxoglutarate and L-glutamine (NADP(+) route): step 1/1. It functions in the pathway energy metabolism; nitrogen metabolism. The protein is Glutamate synthase [NADPH] large chain (gltA) of Bacillus subtilis (strain 168).